Here is a 562-residue protein sequence, read N- to C-terminus: Putative transport protein ETA_21820 (562 aa).

5 helical membrane-spanning segments follow: residues 8–28, 32–52, 66–86, 94–114, and 158–178; these read LLIGNHILLLFVVLALGLCLG, LGSVQLGNSIGVLVVSLLLGQ, FMLFIFCVGVEAGPNFFSIFF, MLAIVMVSSAMVLALGLGKLF, and HLSLGYALTYLVGLVSLIFGA. 2 consecutive RCK C-terminal domains span residues 202–288 and 290–373; these read LDPD…SFRN and KEVF…RIGF. 6 helical membrane passes run 383–403, 406–426, 440–460, 473–493, 503–523, and 540–560; these read LLAFCAFFILGLMIGMITFQF, FNFGIGNAAGLLFAGIMLGFL, ALTMVKEFGLMVFMAGVGLSA, LLMLGAGLIVSLVPVVICFLF, ALLFGAIMGARTCAPAMEIIS, and AIANVLLTLAGTLIVIIWPIL.

This sequence belongs to the AAE transporter (TC 2.A.81) family. YbjL subfamily.

It localises to the cell membrane. The protein is Putative transport protein ETA_21820 of Erwinia tasmaniensis (strain DSM 17950 / CFBP 7177 / CIP 109463 / NCPPB 4357 / Et1/99).